The following is a 300-amino-acid chain: tRNA dimethylallyltransferase 2 (300 aa).

13–20 (GPTGVGKT) contacts ATP. 15 to 20 (TGVGKT) provides a ligand contact to substrate. An interaction with substrate tRNA region spans residues 38-41 (DSRQ).

This sequence belongs to the IPP transferase family. In terms of assembly, monomer. Requires Mg(2+) as cofactor.

It carries out the reaction adenosine(37) in tRNA + dimethylallyl diphosphate = N(6)-dimethylallyladenosine(37) in tRNA + diphosphate. Its function is as follows. Catalyzes the transfer of a dimethylallyl group onto the adenine at position 37 in tRNAs that read codons beginning with uridine, leading to the formation of N6-(dimethylallyl)adenosine (i(6)A). This is tRNA dimethylallyltransferase 2 from Porphyromonas gingivalis (strain ATCC 33277 / DSM 20709 / CIP 103683 / JCM 12257 / NCTC 11834 / 2561).